Reading from the N-terminus, the 290-residue chain is 33 kDa chaperonin (290 aa).

2 cysteine pairs are disulfide-bonded: C235/C237 and C268/C271.

It belongs to the HSP33 family. In terms of processing, under oxidizing conditions two disulfide bonds are formed involving the reactive cysteines. Under reducing conditions zinc is bound to the reactive cysteines and the protein is inactive.

The protein localises to the cytoplasm. Functionally, redox regulated molecular chaperone. Protects both thermally unfolding and oxidatively damaged proteins from irreversible aggregation. Plays an important role in the bacterial defense system toward oxidative stress. The sequence is that of 33 kDa chaperonin from Streptococcus sanguinis (strain SK36).